Reading from the N-terminus, the 415-residue chain is ER-derived vesicles protein ERV46 (415 aa).

The Cytoplasmic portion of the chain corresponds to 1–24 (MKRSTLLSLDAFAKTEEDVRVRTR). Residues 25–45 (AGGLITLSCILTTLFLLVNEW) form a helical membrane-spanning segment. Over 46–376 (GQFNSVVTRP…VINKEQHGQT (331 aa)) the chain is Lumenal. A helical transmembrane segment spans residues 377–397 (WSGFILNCITSIGGVLAVGTV). Residues 398–415 (MDKLFYKAQRSIWGKKSQ) are Cytoplasmic-facing. A Phenylalanine-tyrosine motif motif is present at residues 402–403 (FY).

This sequence belongs to the ERGIC family. Interacts with ERV41.

The protein resides in the endoplasmic reticulum membrane. It localises to the golgi apparatus membrane. Constituent of COPII-coated endoplasmic reticulum-derived transport vesicles. Required for efficient transport of a subset of secretory proteins to the Golgi. The C-terminal Phe-Tyr motif is required for exit from the endoplasmic reticulum. Facilitates retrograde transport from the Golgi to the endoplasmic reticulum. The sequence is that of ER-derived vesicles protein ERV46 (ERV46) from Saccharomyces cerevisiae (strain ATCC 204508 / S288c) (Baker's yeast).